A 518-amino-acid polypeptide reads, in one-letter code: Probable triacylglyceride transporter BCG_1471c (518 aa).

14 helical membrane passes run 7-27, 46-66, 76-96, 110-130, 144-164, 170-190, 201-221, 230-250, 270-290, 308-328, 337-357, 379-401, 408-428, and 475-495; these read VAIS…YVVV, RITW…PLLG, LMLQ…ALAG, IQGV…ADLW, AAQE…VWLL, VFWI…FSLP, VDLV…IGLY, VLPD…VAFF, PFLS…VTLV, AGML…GGWI, VAFA…HWPV, LVVA…LRVV, IASA…VAAL, and IFTI…LISG.

Belongs to the major facilitator superfamily.

It is found in the cell inner membrane. Inhibited by CCCP and valinomycin. Its function is as follows. In association with lipoprotein LprG probably transports triacylglycerides (TAG) across the inner cell membrane into the periplasm; TAG probably regulates lipid metabolism and growth regulation. Confers resistance to several drugs such as rifampicin, clofazimine and novobiocin; is also part of the oxidative stress response and is needed to maintain normal growth characteristics. Probably an efflux transporter, involved in maintaining correct cell wall permeability. Probably required with LprG for normal surface localization of lipoarabinomannan (LAM). Required for optimal growth on cholesterol. The sequence is that of Probable triacylglyceride transporter BCG_1471c from Mycobacterium bovis (strain BCG / Pasteur 1173P2).